A 180-amino-acid chain; its full sequence is NADH-quinone oxidoreductase subunit I (180 aa).

4Fe-4S ferredoxin-type domains follow at residues 48–80 (IVLT…LQKA) and 90–119 (EFFR…LTPD). Residues Cys-60, Cys-63, Cys-66, Cys-70, Cys-99, Cys-102, Cys-105, and Cys-109 each contribute to the [4Fe-4S] cluster site.

This sequence belongs to the complex I 23 kDa subunit family. NDH-1 is composed of 13 different subunits. Subunits NuoA, H, J, K, L, M, N constitute the membrane sector of the complex. It depends on [4Fe-4S] cluster as a cofactor.

The protein localises to the cell inner membrane. The enzyme catalyses a quinone + NADH + 5 H(+)(in) = a quinol + NAD(+) + 4 H(+)(out). NDH-1 shuttles electrons from NADH, via FMN and iron-sulfur (Fe-S) centers, to quinones in the respiratory chain. The immediate electron acceptor for the enzyme in this species is believed to be ubiquinone. Couples the redox reaction to proton translocation (for every two electrons transferred, four hydrogen ions are translocated across the cytoplasmic membrane), and thus conserves the redox energy in a proton gradient. The protein is NADH-quinone oxidoreductase subunit I of Erwinia tasmaniensis (strain DSM 17950 / CFBP 7177 / CIP 109463 / NCPPB 4357 / Et1/99).